The following is a 136-amino-acid chain: Aspartate 1-decarboxylase (136 aa).

Ser-25 acts as the Schiff-base intermediate with substrate; via pyruvic acid in catalysis. Ser-25 bears the Pyruvic acid (Ser) mark. Residue Thr-57 coordinates substrate. Tyr-58 acts as the Proton donor in catalysis. Residue 73-75 (GAA) coordinates substrate.

It belongs to the PanD family. As to quaternary structure, heterooctamer of four alpha and four beta subunits. Requires pyruvate as cofactor. Is synthesized initially as an inactive proenzyme, which is activated by self-cleavage at a specific serine bond to produce a beta-subunit with a hydroxyl group at its C-terminus and an alpha-subunit with a pyruvoyl group at its N-terminus.

It is found in the cytoplasm. The enzyme catalyses L-aspartate + H(+) = beta-alanine + CO2. It participates in cofactor biosynthesis; (R)-pantothenate biosynthesis; beta-alanine from L-aspartate: step 1/1. Its function is as follows. Catalyzes the pyruvoyl-dependent decarboxylation of aspartate to produce beta-alanine. This is Aspartate 1-decarboxylase from Corynebacterium efficiens (strain DSM 44549 / YS-314 / AJ 12310 / JCM 11189 / NBRC 100395).